The chain runs to 328 residues: MANSASPEQNQNHCSASNSSIPLTQANLPTLTLSGKIRVTVTFFLFLLSTTFNASFLLKLHKWTQKKENGKKLSKMKVLLKHLTLANLLETLIVMPLDGMWNITVQWYAGELLCKVLSYLKLFSMYAPAFMMVVISLDRSLAITRPLAVKSNSKLGRSMIGLAWLLSSIFAGPQLYIFRMIHLADSSGQTEGFSQCVTHCSFPQWWHQAFYNFFTFSCLFIIPLLFMLICNAKIIFTLTRVLHQDPHKLQLNQSKNNIPRARLRTLKMTVAFATSFTVCWTPYYVLGIWYWFDPEMLNRVSDPVNHFFFLFALLNPCFDPLIYGYFSL.

At 1–38 (MANSASPEQNQNHCSASNSSIPLTQANLPTLTLSGKIR) the chain is on the extracellular side. The N-linked (GlcNAc...) asparagine glycan is linked to asparagine 18. The chain crosses the membrane as a helical span at residues 39 to 59 (VTVTFFLFLLSTTFNASFLLK). Residues 60–84 (LHKWTQKKENGKKLSKMKVLLKHLT) lie on the Cytoplasmic side of the membrane. A helical transmembrane segment spans residues 85–105 (LANLLETLIVMPLDGMWNITV). Residues 106–115 (QWYAGELLCK) are Extracellular-facing. The cysteines at positions 114 and 196 are disulfide-linked. The helical transmembrane segment at 116–136 (VLSYLKLFSMYAPAFMMVVIS) threads the bilayer. Residues 137–157 (LDRSLAITRPLAVKSNSKLGR) are Cytoplasmic-facing. Residues 158-178 (SMIGLAWLLSSIFAGPQLYIF) traverse the membrane as a helical segment. Residues 179–208 (RMIHLADSSGQTEGFSQCVTHCSFPQWWHQ) lie on the Extracellular side of the membrane. Residues 209–229 (AFYNFFTFSCLFIIPLLFMLI) traverse the membrane as a helical segment. Residues 230–271 (CNAKIIFTLTRVLHQDPHKLQLNQSKNNIPRARLRTLKMTVA) are Cytoplasmic-facing. The helical transmembrane segment at 272-292 (FATSFTVCWTPYYVLGIWYWF) threads the bilayer. The Extracellular portion of the chain corresponds to 293 to 306 (DPEMLNRVSDPVNH). The chain crosses the membrane as a helical span at residues 307-327 (FFFLFALLNPCFDPLIYGYFS). Position 328 (leucine 328) is a topological domain, cytoplasmic.

Belongs to the G-protein coupled receptor 1 family.

The protein resides in the cell membrane. Functionally, receptor for gonadotropin releasing hormone (GnRH) that mediates the action of GnRH to stimulate the secretion of the gonadotropic hormones luteinizing hormone (LH) and follicle-stimulating hormone (FSH). This receptor mediates its action by association with G-proteins that activate a phosphatidylinositol-calcium second messenger system. This Equus caballus (Horse) protein is Gonadotropin-releasing hormone receptor (GNRHR).